The chain runs to 370 residues: 4-hydroxy-3-methylbut-2-en-1-yl diphosphate synthase (flavodoxin) (370 aa).

C265, C268, C300, and E307 together coordinate [4Fe-4S] cluster.

This sequence belongs to the IspG family. It depends on [4Fe-4S] cluster as a cofactor.

It catalyses the reaction (2E)-4-hydroxy-3-methylbut-2-enyl diphosphate + oxidized [flavodoxin] + H2O + 2 H(+) = 2-C-methyl-D-erythritol 2,4-cyclic diphosphate + reduced [flavodoxin]. It functions in the pathway isoprenoid biosynthesis; isopentenyl diphosphate biosynthesis via DXP pathway; isopentenyl diphosphate from 1-deoxy-D-xylulose 5-phosphate: step 5/6. Its function is as follows. Converts 2C-methyl-D-erythritol 2,4-cyclodiphosphate (ME-2,4cPP) into 1-hydroxy-2-methyl-2-(E)-butenyl 4-diphosphate. The polypeptide is 4-hydroxy-3-methylbut-2-en-1-yl diphosphate synthase (flavodoxin) (Symbiobacterium thermophilum (strain DSM 24528 / JCM 14929 / IAM 14863 / T)).